The sequence spans 163 residues: Phosphopantetheine adenylyltransferase (163 aa).

Ser-10 lines the substrate pocket. ATP contacts are provided by residues 10-11 (SF) and His-18. Positions 42, 74, and 88 each coordinate substrate. ATP contacts are provided by residues 89–91 (GLR), Glu-99, and 124–130 (YSFLSSS).

It belongs to the bacterial CoaD family. As to quaternary structure, homohexamer. Mg(2+) is required as a cofactor.

It is found in the cytoplasm. It carries out the reaction (R)-4'-phosphopantetheine + ATP + H(+) = 3'-dephospho-CoA + diphosphate. It participates in cofactor biosynthesis; coenzyme A biosynthesis; CoA from (R)-pantothenate: step 4/5. Reversibly transfers an adenylyl group from ATP to 4'-phosphopantetheine, yielding dephospho-CoA (dPCoA) and pyrophosphate. This is Phosphopantetheine adenylyltransferase from Bacillus anthracis (strain A0248).